The sequence spans 225 residues: Uridylate kinase (225 aa).

Residue 9 to 10 (GS) participates in ATP binding. UMP is bound at residue G44. ATP is bound by residues G45 and R49. Residues D66 and 114-120 (THPGHTT) each bind UMP. 4 residues coordinate ATP: T140, N141, Y146, and D149.

It belongs to the UMP kinase family. In terms of assembly, homohexamer.

It localises to the cytoplasm. The catalysed reaction is UMP + ATP = UDP + ADP. Its pathway is pyrimidine metabolism; CTP biosynthesis via de novo pathway; UDP from UMP (UMPK route): step 1/1. Its activity is regulated as follows. Inhibited by UTP. Its function is as follows. Catalyzes the reversible phosphorylation of UMP to UDP. In Thermococcus gammatolerans (strain DSM 15229 / JCM 11827 / EJ3), this protein is Uridylate kinase.